Here is a 240-residue protein sequence, read N- to C-terminus: Pro-opiomelanocortin B (240 aa).

Positions 1 to 36 are cleaved as a signal peptide; the sequence is MFGTFLQNQSVRLNMVCAPWLLAVVVVCVCNPGVEG. Glutamine 37 carries the pyrrolidone carboxylic acid modification. Residue histidine 111 is a propeptide. At serine 112 the chain carries N-acetylserine; in Corticotropin. Position 124 is an isoleucine amide (isoleucine 124).

This sequence belongs to the POMC family. Post-translationally, specific enzymatic cleavages at paired basic residues yield the different active peptides. In terms of processing, acetylation of beta-endorphin occurs in a tissue-specific manner. As to expression, pituitary and hypothalamus of adult diploid animals.

It is found in the secreted. Functionally, stimulates the adrenal glands to release cortisol. In terms of biological role, melanocyte-stimulating hormone alpha: Anorexigenic peptide. Increases the pigmentation of skin by increasing melanin production in melanocytes. Its function is as follows. Melanocyte-stimulating hormone beta: Increases the pigmentation of skin by increasing melanin production in melanocytes. Beta-endorphin: Endogenous orexigenic opiate. Functionally, endogenous opiate. This is Pro-opiomelanocortin B (pomcb) from Oncorhynchus mykiss (Rainbow trout).